The sequence spans 530 residues: uncharacterized protein (530 aa).

The stretch at 485 to 529 (SKEENREIKLSIRENKEKQRKKSVEKSVSKLQNQLNRLLNKNTIE) forms a coiled coil.

This is an uncharacterized protein from Acanthamoeba polyphaga (Amoeba).